Consider the following 933-residue polypeptide: Progesterone receptor (933 aa).

Positions 1 to 48 are disordered; sequence MTELKAKGPRAPHVAGGPPSPEVGSPLLCRPAAGPFEGSQTSDTLPEV. The AF3; mediates transcriptional activation stretch occupies residues 1–164; the sequence is MTELKAKGPR…PATQRVLSPL (164 aa). The interval 1 to 566 is modulating, Pro-Rich; sequence MTELKAKGPR…YSFESLPQKI (566 aa). Ser-20 carries the post-translational modification Phosphoserine. An LXXL motif 1 motif is present at residues 55-59; it reads LDGLL. The disordered stretch occupies residues 66–255; the sequence is GQDLPDEKTQ…GAAAGGGAAA (190 aa). Ser-81 bears the Phosphoserine mark. The LXXL motif 2 motif lies at 115–119; the sequence is LDTLL. Phosphoserine is present on residues Ser-130 and Ser-162. A mediates transcriptional transrepression region spans residues 165–305; that stretch reads MSRSGGKTGD…LATTMMDFIH (141 aa). The Nuclear localization signal motif lies at 183–187; it reads KVLPR. A phosphoserine mark is found at Ser-190 and Ser-213. Phosphoserine; by MAPK1 is present on Ser-294. The tract at residues 331 to 378 is disordered; that stretch reads GGAGAASAFAPPQSSPSASSTPVAVGDFPDCAYPPDAEPKDNAYPLYG. Residues 335–350 are compositionally biased toward low complexity; sequence AASAFAPPQSSPSASS. A Phosphoserine; by MAPK modification is found at Ser-345. Residue Lys-388 forms a Glycyl lysine isopeptide (Lys-Gly) (interchain with G-Cter in SUMO); alternate linkage. Residue Lys-388 forms a Glycyl lysine isopeptide (Lys-Gly) (interchain with G-Cter in ubiquitin); alternate linkage. Ser-400 is subject to Phosphoserine; by CDK2. The segment at 415-454 is disordered; it reads PDYPLGPPPQLPPRAPPSRPGEAAVTAAPASASVSSASSP. A compositionally biased stretch (pro residues) spans 418-433; sequence PLGPPPQLPPRAPPSR. Residues 437 to 454 are compositionally biased toward low complexity; sequence AAVTAAPASASVSSASSP. An AF1; mediates transcriptional activation region spans residues 456-546; that stretch reads STLECILYKA…VYPPYLNYLR (91 aa). Lys-531 is covalently cross-linked (Glycyl lysine isopeptide (Lys-Gly) (interchain with G-Cter in SUMO)). NR C4-type zinc fingers lie at residues 567-587 and 603-627; these read CLICGDEASGCHYGVLTCGSC and CAGRNDCIVDKIRRKNCPACRLRKC. The segment at residues 567 to 639 is a DNA-binding region (nuclear receptor); it reads CLICGDEASG…AGMVLGGRKF (73 aa). Ser-676 is modified (phosphoserine). Residues 679 to 913 enclose the NR LBD domain; that stretch reads QDIQLIPPLI…EFPEMMSEVI (235 aa). An AF2; mediates transcriptional activation region spans residues 687-933; sequence LIKLLMSIEP…MVKPLLFHKK (247 aa).

Belongs to the nuclear hormone receptor family. Interacts with SMARD1 and UNC45A. Interacts with CUEDC2; the interaction promotes ubiquitination, decreases sumoylation, and represses transcriptional activity. Interacts with PIAS3; the interaction promotes sumoylation of PR in a hormone-dependent manner, inhibits DNA-binding, and alters nuclear export. Interacts with SP1; the interaction requires ligand-induced phosphorylation on Ser-345 by ERK1/2-MAPK. Interacts with PRMT2. Interacts with NCOA2 and NCOA1. Interacts with KLF9. Interacts with GTF2B. Phosphorylated on multiple serine sites. Several of these sites are hormone-dependent. Phosphorylation on Ser-294 is highly hormone-dependent and modulates ubiquitination and sumoylation on Lys-388. Phosphorylation on Ser-345 also requires induction by hormone. Basal phosphorylation on Ser-81, Ser-162, Ser-190 and Ser-400 is increased in response to progesterone and can be phosphorylated in vitro by the CDK2-A1 complex. Increased levels of phosphorylation on Ser-400 also in the presence of EGF, heregulin, IGF, PMA and FBS. Phosphorylation at this site by CDK2 is ligand-independent, and increases nuclear translocation and transcriptional activity. Phosphorylation at Ser-162 and Ser-294, but not at Ser-190, is impaired during the G(2)/M phase of the cell cycle. Phosphorylation on Ser-345 by ERK1/2 MAPK is required for interaction with SP1. In terms of processing, sumoylation is hormone-dependent and represses transcriptional activity. Sumoylation on all three sites is enhanced by PIAS3. Desumoylated by SENP1. Sumoylation on Lys-388, the main site of sumoylation, is repressed by ubiquitination on the same site, and modulated by phosphorylation at Ser-294. Post-translationally, ubiquitination is hormone-dependent and represses sumoylation on the same site. Promoted by MAPK-mediated phosphorylation on Ser-294. Palmitoylated by ZDHHC7 and ZDHHC21. Palmitoylation is required for plasma membrane targeting and for rapid intracellular signaling via ERK and AKT kinases and cAMP generation.

The protein resides in the nucleus. The protein localises to the cytoplasm. Functionally, the steroid hormones and their receptors are involved in the regulation of eukaryotic gene expression and affect cellular proliferation and differentiation in target tissues. Transcriptional activator of several progesteron-dependent promoters in a variety of cell types. Involved in activation of SRC-dependent MAPK signaling on hormone stimulation. The sequence is that of Progesterone receptor (PGR) from Trachypithecus obscurus (Dusky leaf-monkey).